The chain runs to 468 residues: ATP synthase subunit beta (468 aa).

Gly155–Thr162 contributes to the ATP binding site.

This sequence belongs to the ATPase alpha/beta chains family. As to quaternary structure, F-type ATPases have 2 components, CF(1) - the catalytic core - and CF(0) - the membrane proton channel. CF(1) has five subunits: alpha(3), beta(3), gamma(1), delta(1), epsilon(1). CF(0) has three main subunits: a(1), b(2) and c(9-12). The alpha and beta chains form an alternating ring which encloses part of the gamma chain. CF(1) is attached to CF(0) by a central stalk formed by the gamma and epsilon chains, while a peripheral stalk is formed by the delta and b chains.

Its subcellular location is the cell membrane. It carries out the reaction ATP + H2O + 4 H(+)(in) = ADP + phosphate + 5 H(+)(out). Functionally, produces ATP from ADP in the presence of a proton gradient across the membrane. The catalytic sites are hosted primarily by the beta subunits. In Streptococcus agalactiae serotype III (strain NEM316), this protein is ATP synthase subunit beta.